We begin with the raw amino-acid sequence, 120 residues long: MDKSFTLFLTLTILVVFIISSPPVQAGFANDLGGVAWATTGDNGSGCHGSIAECIGAEEEEMDSEINRRILATTKYISYQSLKRNSVPCSRRGASYYNCQNGAQANPYSRGCSKIARCRS.

The first 26 residues, 1 to 26, serve as a signal peptide directing secretion; it reads MDKSFTLFLTLTILVVFIISSPPVQA. A propeptide spans 27 to 71 (removed in mature form); sequence GFANDLGGVAWATTGDNGSGCHGSIAECIGAEEEEMDSEINRRIL. A glycan (N-linked (GlcNAc...) asparagine) is linked at N43. 2 disulfide bridges follow: C89–C99 and C112–C118.

It belongs to the plant rapid alkalinization factor (RALF) family. As to quaternary structure, interacts with FER and promotes its phosphorylation and subsequent activation. In terms of processing, proteolytically cleaved, probably by S1P, a subtilisin-like serine protease (subtilase). As to expression, expressed in roots and stems.

It localises to the secreted. In terms of biological role, cell signaling peptide that may regulate plant stress, growth, and development. Mediates a rapid alkalinization of extracellular space by mediating a transient increase in the cytoplasmic Ca(2+) concentration leading to a calcium-dependent signaling events through a cell surface receptor and a concomitant activation of some intracellular mitogen-activated protein kinases. Mostly active in roots. Prevents plant growth (e.g. root and leaf length). Suppresses cell elongation of the primary root by activating the cell surface receptor FER and triggering phosphorylation of AHA2 and subsequent extracellular alkalinization. This is Protein RALF-like 1 (RALF1) from Arabidopsis thaliana (Mouse-ear cress).